Reading from the N-terminus, the 191-residue chain is dTTP/UTP pyrophosphatase (191 aa).

Catalysis depends on Asp-68, which acts as the Proton acceptor.

It belongs to the Maf family. YhdE subfamily. A divalent metal cation is required as a cofactor.

It localises to the cytoplasm. It catalyses the reaction dTTP + H2O = dTMP + diphosphate + H(+). The enzyme catalyses UTP + H2O = UMP + diphosphate + H(+). Functionally, nucleoside triphosphate pyrophosphatase that hydrolyzes dTTP and UTP. May have a dual role in cell division arrest and in preventing the incorporation of modified nucleotides into cellular nucleic acids. The sequence is that of dTTP/UTP pyrophosphatase from Thermoanaerobacter pseudethanolicus (strain ATCC 33223 / 39E) (Clostridium thermohydrosulfuricum).